Here is a 270-residue protein sequence, read N- to C-terminus: MNKNKKGFKLFFIFPVIAFGLGTWQVYRYDWKKRLIQRAKDRMEEDPIELSNSFIKNFKGSSFGDLNKYEFRRVYLNGKVIDNQYVLLGPRSIDGTLGYYVISPLQLSDGTRILLNRGWSASTPKSNYKIPYAIEELKLIHQKEKEQGQQQGNQESILYRYFNILGVISKTKERGSAFTPTNQPEKGQWYSLDVDAMADQLNTEPLMINTMDETEINSKPSSLPNPQFKRFDNDVESSFHNKHMSYIGTWYTLSASLFFIYFRYMRKLPK.

2 consecutive transmembrane segments (helical) span residues 7–29 (GFKL…VYRY) and 246–265 (YIGT…FRYM).

It belongs to the SURF1 family.

The protein localises to the mitochondrion inner membrane. Functionally, probably involved in the biogenesis of the COX complex. This chain is SURF1-like protein (surf1-1), found in Dictyostelium discoideum (Social amoeba).